A 171-amino-acid chain; its full sequence is Viral CASP8 and FADD-like apoptosis regulator (171 aa).

DED domains lie at 1–74 and 92–171; these read MSHY…RIFG and PFRC…NLQV.

Associates with the death-inducing signaling complex (DISC) formed by TNFRSF6, FADD and caspase-8. Interacts with FADD.

In terms of biological role, inhibits TNFRSF1A, TNFRSF6, TNFRSF10 and TNFRSF12 induced apoptosis. May interfere with caspase-8 recruitment and activation at the death-inducing signaling complex (DISC). May lead to higher virus production and contribute to virus persistence and oncogenicity. The polypeptide is Viral CASP8 and FADD-like apoptosis regulator (Equus caballus (Horse)).